The sequence spans 128 residues: Large ribosomal subunit protein eL22 (128 aa).

It belongs to the eukaryotic ribosomal protein eL22 family. As to quaternary structure, component of the large ribosomal subunit.

It localises to the cytoplasm. In terms of biological role, component of the large ribosomal subunit. The ribosome is a large ribonucleoprotein complex responsible for the synthesis of proteins in the cell. The sequence is that of Large ribosomal subunit protein eL22 (rpl22) from Ictalurus punctatus (Channel catfish).